Consider the following 250-residue polypeptide: Pyrroloquinoline-quinone synthase (250 aa).

It belongs to the PqqC family.

It catalyses the reaction 6-(2-amino-2-carboxyethyl)-7,8-dioxo-1,2,3,4,7,8-hexahydroquinoline-2,4-dicarboxylate + 3 O2 = pyrroloquinoline quinone + 2 H2O2 + 2 H2O + H(+). It functions in the pathway cofactor biosynthesis; pyrroloquinoline quinone biosynthesis. In terms of biological role, ring cyclization and eight-electron oxidation of 3a-(2-amino-2-carboxyethyl)-4,5-dioxo-4,5,6,7,8,9-hexahydroquinoline-7,9-dicarboxylic-acid to PQQ. The protein is Pyrroloquinoline-quinone synthase of Xanthomonas axonopodis pv. citri (strain 306).